The following is a 602-amino-acid chain: Elongation factor 4 (602 aa).

The 182-residue stretch at 8 to 189 folds into the tr-type G domain; that stretch reads KNIRNFSIIA…KIITTIPAPS (182 aa). GTP-binding positions include 20-25 and 136-139; these read DHGKST and NKID.

The protein belongs to the TRAFAC class translation factor GTPase superfamily. Classic translation factor GTPase family. LepA subfamily.

The protein localises to the cell inner membrane. The enzyme catalyses GTP + H2O = GDP + phosphate + H(+). In terms of biological role, required for accurate and efficient protein synthesis under certain stress conditions. May act as a fidelity factor of the translation reaction, by catalyzing a one-codon backward translocation of tRNAs on improperly translocated ribosomes. Back-translocation proceeds from a post-translocation (POST) complex to a pre-translocation (PRE) complex, thus giving elongation factor G a second chance to translocate the tRNAs correctly. Binds to ribosomes in a GTP-dependent manner. This is Elongation factor 4 from Helicobacter pylori (strain HPAG1).